The following is a 735-amino-acid chain: Phosphoribosylformylglycinamidine synthase subunit PurL (735 aa).

Histidine 50 is an active-site residue. 2 residues coordinate ATP: tyrosine 53 and lysine 92. Glutamate 94 serves as a coordination point for Mg(2+). Substrate contacts are provided by residues 95 to 98 (SHNH) and arginine 117. The active-site Proton acceptor is histidine 96. Aspartate 118 serves as a coordination point for Mg(2+). Glutamine 241 is a binding site for substrate. Residue aspartate 269 coordinates Mg(2+). Residue 313–315 (ESQ) coordinates substrate. The ATP site is built by aspartate 495 and glycine 532. Residue asparagine 533 coordinates Mg(2+). Residue serine 535 coordinates substrate.

It belongs to the FGAMS family. Monomer. Part of the FGAM synthase complex composed of 1 PurL, 1 PurQ and 2 PurS subunits.

Its subcellular location is the cytoplasm. It carries out the reaction N(2)-formyl-N(1)-(5-phospho-beta-D-ribosyl)glycinamide + L-glutamine + ATP + H2O = 2-formamido-N(1)-(5-O-phospho-beta-D-ribosyl)acetamidine + L-glutamate + ADP + phosphate + H(+). The protein operates within purine metabolism; IMP biosynthesis via de novo pathway; 5-amino-1-(5-phospho-D-ribosyl)imidazole from N(2)-formyl-N(1)-(5-phospho-D-ribosyl)glycinamide: step 1/2. Part of the phosphoribosylformylglycinamidine synthase complex involved in the purines biosynthetic pathway. Catalyzes the ATP-dependent conversion of formylglycinamide ribonucleotide (FGAR) and glutamine to yield formylglycinamidine ribonucleotide (FGAM) and glutamate. The FGAM synthase complex is composed of three subunits. PurQ produces an ammonia molecule by converting glutamine to glutamate. PurL transfers the ammonia molecule to FGAR to form FGAM in an ATP-dependent manner. PurS interacts with PurQ and PurL and is thought to assist in the transfer of the ammonia molecule from PurQ to PurL. This chain is Phosphoribosylformylglycinamidine synthase subunit PurL, found in Bartonella henselae (strain ATCC 49882 / DSM 28221 / CCUG 30454 / Houston 1) (Rochalimaea henselae).